The chain runs to 540 residues: Acrosin-binding protein (540 aa).

The signal sequence occupies residues 1–24 (MKLAASFLLMLLEVLLLPETPLSA). Positions 25-104 (EEALASTPGS…ASWFESFCQF (80 aa)) are pro-ACR binding. The propeptide at 25–272 (EEALASTPGS…NPSFFTPRVR (248 aa)) is removed in mature form. The segment at 181–266 (SLSLGGKEQQ…SKSLSSNPSF (86 aa)) is disordered. Over residues 195–213 (LGLEQQHKQEQIQEHKLEE) the composition is skewed to basic and acidic residues. Residues 214 to 241 (AQEQEEQEEEEEEEEAKQEEGQGTEEGL) are compositionally biased toward acidic residues. The segment covering 256-266 (QSKSLSSNPSF) has biased composition (polar residues). The tract at residues 316 to 424 (LPHTETLMVL…NQAKIPEKGR (109 aa)) is pro-ACR binding.

Binds pro-ACR. Does not bind the mature form of ACR. In terms of assembly, binds pro-ACR. Does not bind mature form of ACR. In terms of processing, the N-terminus is blocked. Post-translationally, phosphorylated on Tyr residues in capacitated sperm. Synthesized as a 60-kDa precursor, the 32-kDa mature form is post-translationally produced by the removal of the N-terminal half of the precursor during sperm maturation in the testis and/or epididymis.

Its subcellular location is the cytoplasmic vesicle. It is found in the secretory vesicle. The protein resides in the acrosome. Its function is as follows. Acrosomal protein that maintains proacrosin (pro-ACR) as an enzymatically inactive zymogen in the acrosome. Involved also in the acrosome formation. Functionally, maintains pro-ACR as an enzymatically inactive zymogen in the acrosome until acrosomal exocytosis. Partially also contributes to the assembly of acrosomal proteins to form an acrosomal granule. In terms of biological role, rodent specific isoform that participates in the formation of the acrosomal granule into the center of the acrosomal vesicle during early spermiogenesis. In the fertilization process promotes ACR release from the acrosome during acrosomal exocytosis. The protein is Acrosin-binding protein of Rattus norvegicus (Rat).